The chain runs to 175 residues: Translation initiation factor IF-3 (175 aa).

It belongs to the IF-3 family. Monomer.

It localises to the cytoplasm. Its function is as follows. IF-3 binds to the 30S ribosomal subunit and shifts the equilibrium between 70S ribosomes and their 50S and 30S subunits in favor of the free subunits, thus enhancing the availability of 30S subunits on which protein synthesis initiation begins. This chain is Translation initiation factor IF-3, found in Chromobacterium violaceum (strain ATCC 12472 / DSM 30191 / JCM 1249 / CCUG 213 / NBRC 12614 / NCIMB 9131 / NCTC 9757 / MK).